The sequence spans 149 residues: UPF0178 protein Sama_3557 (149 aa).

This sequence belongs to the UPF0178 family.

This chain is UPF0178 protein Sama_3557, found in Shewanella amazonensis (strain ATCC BAA-1098 / SB2B).